Consider the following 195-residue polypeptide: GTP-dependent dephospho-CoA kinase (195 aa).

Asp49, Val50, Asp68, Glu127, and Asp150 together coordinate GTP.

This sequence belongs to the GTP-dependent DPCK family.

The catalysed reaction is 3'-dephospho-CoA + GTP = GDP + CoA + H(+). Its pathway is cofactor biosynthesis; coenzyme A biosynthesis. Functionally, catalyzes the GTP-dependent phosphorylation of the 3'-hydroxyl group of dephosphocoenzyme A to form coenzyme A (CoA). This chain is GTP-dependent dephospho-CoA kinase, found in Methanosarcina mazei (strain ATCC BAA-159 / DSM 3647 / Goe1 / Go1 / JCM 11833 / OCM 88) (Methanosarcina frisia).